Reading from the N-terminus, the 180-residue chain is MNKKFILPPSEIELFQEMIKGTKKLPQDKIRHQTPRKKVTHYPTERLQQEQIDASYYFSDEFQPNLATEGPMRYLREGANAYELKKLRRGDYVPEFFLDLHGLTQLIAKQEIGALIAACRREHVYCACIMHGHGKHILKQQTPLWLAQHPDIIAFHQAPKEWGGDAALLLLVENDDIARR.

The region spanning 98–173 (LDLHGLTQLI…GDAALLLLVE (76 aa)) is the Smr domain.

The protein belongs to the SmrB family. In terms of assembly, associates with collided ribosomes, but not with correctly translating polysomes.

Functionally, acts as a ribosome collision sensor. Detects stalled/collided disomes (pairs of ribosomes where the leading ribosome is stalled and a second ribosome has collided with it) and endonucleolytically cleaves mRNA at the 5' boundary of the stalled ribosome. Stalled/collided disomes form a new interface (primarily via the 30S subunits) that binds SmrB. Cleaved mRNA becomes available for tmRNA ligation, leading to ribosomal subunit dissociation and rescue of stalled ribosomes. The polypeptide is Ribosome rescue factor SmrB (Proteus mirabilis (strain HI4320)).